Reading from the N-terminus, the 409-residue chain is uncharacterized protein (409 aa).

Transmembrane regions (helical) follow at residues 62-82 (FSLGIAAEAVLFIFALWWVWI), 100-120 (LLLFTLMFFGIVMAIALPEAF), 123-143 (MGLLFAVAYSAMQVSRSLFAL), 152-172 (ASFMTFFRITAWLTISSTFWI), 183-203 (VVLWIVALVVEYTGPTVRYWV), 252-272 (GTPWVLCFSFLTTVLMWWIYF), 293-313 (AQYLFTYGHLPIVGGIIFTAV), 328-348 (YNFALAQLGGPILFLAGTMWM), 355-375 (VLPYSHVFGISLLTASFTLVP), and 376-396 (FVANFAIQALTGVILLVVAVW).

It localises to the cell membrane. This is an uncharacterized protein from Rhizobium meliloti (strain 1021) (Ensifer meliloti).